The primary structure comprises 177 residues: ECF RNA polymerase sigma factor SigL (177 aa).

Positions 18-85 are sigma-70 factor domain-2; it reads LYDEHAAVLW…MIIDERRSAR (68 aa). Positions 42–45 match the Interaction with polymerase core subunit RpoC motif; sequence DVVQ. The interval 119 to 167 is sigma-70 factor domain-4; that stretch reads ALAQLSAEHRAVIQRSYYRGWSTAQIATDLGIAEGTVKSRLHYAVRALR. The segment at residues 141 to 160 is a DNA-binding region (H-T-H motif); that stretch reads TAQIATDLGIAEGTVKSRLH.

The protein belongs to the sigma-70 factor family. ECF subfamily. Interacts transiently with the RNA polymerase catalytic core formed by RpoA, RpoB, RpoC and RpoZ (2 alpha, 1 beta, 1 beta' and 1 omega subunit) to form the RNA polymerase holoenzyme that can initiate transcription. Interacts (via sigma-70 factor domain 4) with anti-sigma-L factor RslA.

In terms of biological role, sigma factors are initiation factors that promote the attachment of RNA polymerase to specific initiation sites and are then released. Extracytoplasmic function (ECF) sigma factors are held in an inactive form by an anti-sigma factor until released by regulated intramembrane proteolysis. This chain is ECF RNA polymerase sigma factor SigL (sigL), found in Mycobacterium tuberculosis (strain ATCC 35801 / TMC 107 / Erdman).